Reading from the N-terminus, the 264-residue chain is GTP cyclohydrolase FolE2 (264 aa).

It belongs to the GTP cyclohydrolase IV family.

It carries out the reaction GTP + H2O = 7,8-dihydroneopterin 3'-triphosphate + formate + H(+). It participates in cofactor biosynthesis; 7,8-dihydroneopterin triphosphate biosynthesis; 7,8-dihydroneopterin triphosphate from GTP: step 1/1. In terms of biological role, converts GTP to 7,8-dihydroneopterin triphosphate. The sequence is that of GTP cyclohydrolase FolE2 from Ruthia magnifica subsp. Calyptogena magnifica.